A 453-amino-acid chain; its full sequence is uncharacterized protein (453 aa).

Disordered regions lie at residues 140-161 (YGES…TRPQ) and 311-332 (TTTR…SASS).

This is an uncharacterized protein from Caenorhabditis elegans.